The sequence spans 524 residues: Solute carrier family 35 member F5 (524 aa).

2 helical membrane passes run 69–89 (MALGIVILLLVDVIWVASSEL) and 101–121 (FFSTFAKTSMFVLYLLGFIIW). Serine 207 is subject to Phosphoserine. Transmembrane regions (helical) follow at residues 244-264 (ISFFFCFVWFLANLSYQEALS), 269-289 (AIVNILSSTSGLFTLILAAVF), 297-317 (FTLSKLLAVILSIGGVVLVNL), 328-348 (TIGSIWSLAGAMFYAVYIVMI), 362-382 (MFFGFVGLFNLLLLWPGFFLL), 396-416 (VVLLCIIINGLIGTVLSEFLW), 421-441 (FLTSSLIGTLALSLTIPLSII), and 453-473 (WLFFAGAIPVFFSFFIVTLLC). Positions 253–317 (FLANLSYQEA…SIGGVVLVNL (65 aa)) constitute an EamA domain.

Belongs to the SLC35F solute transporter family.

Its subcellular location is the membrane. Its function is as follows. Putative solute transporter. The protein is Solute carrier family 35 member F5 (Slc35f5) of Mus musculus (Mouse).